A 503-amino-acid chain; its full sequence is ATP synthase subunit alpha (503 aa).

170–177 is a binding site for ATP; the sequence is GDRQTGKT.

It belongs to the ATPase alpha/beta chains family. As to quaternary structure, F-type ATPases have 2 components, CF(1) - the catalytic core - and CF(0) - the membrane proton channel. CF(1) has five subunits: alpha(3), beta(3), gamma(1), delta(1), epsilon(1). CF(0) has three main subunits: a(1), b(2) and c(9-12). The alpha and beta chains form an alternating ring which encloses part of the gamma chain. CF(1) is attached to CF(0) by a central stalk formed by the gamma and epsilon chains, while a peripheral stalk is formed by the delta and b chains.

It localises to the cell inner membrane. The catalysed reaction is ATP + H2O + 4 H(+)(in) = ADP + phosphate + 5 H(+)(out). In terms of biological role, produces ATP from ADP in the presence of a proton gradient across the membrane. The alpha chain is a regulatory subunit. The sequence is that of ATP synthase subunit alpha from Geobacter metallireducens (strain ATCC 53774 / DSM 7210 / GS-15).